The primary structure comprises 245 residues: MKIDYLTLFPEMFEGVLNHSILKRAQDKGIINVNTINFRDYSINKHNQVDDYPFGGGQGMVLKPEPVFNAMEDINRNEHTRVILMCPQGRPFTQEIAQELSEAKHIVFICGHYEGYDERIRKHLVTDEISMGDYVLTGGELPAMTMTDAIVRLIPGVLGNQASHQDDSFSDGLLEFPQYTRPREYKNMSVPEVLLSGNHAHIDQWRHEQKLIRTYEKRPDLLEQYPLTEKDREILETYKKKLKND.

Residues Gly-111 and 131–136 contribute to the S-adenosyl-L-methionine site; that span reads MGDYVL.

Belongs to the RNA methyltransferase TrmD family. As to quaternary structure, homodimer.

Its subcellular location is the cytoplasm. The enzyme catalyses guanosine(37) in tRNA + S-adenosyl-L-methionine = N(1)-methylguanosine(37) in tRNA + S-adenosyl-L-homocysteine + H(+). Specifically methylates guanosine-37 in various tRNAs. The chain is tRNA (guanine-N(1)-)-methyltransferase from Staphylococcus epidermidis (strain ATCC 35984 / DSM 28319 / BCRC 17069 / CCUG 31568 / BM 3577 / RP62A).